We begin with the raw amino-acid sequence, 332 residues long: Apoptosis-enhancing nuclease (332 aa).

Positions 1–102 are disordered; it reads MVPREVPESS…VPREAPSSGP (102 aa). Residues 20-36 show a composition bias toward basic residues; the sequence is ARRRHKRRSRQHQRFMA. Positions 21–29 match the Nucleolar localization signal motif; it reads RRRHKRRSR. Positions 63–73 are enriched in polar residues; the sequence is QTPAGTEASGN. One can recognise an Exonuclease domain in the interval 105-261; the sequence is YVAIDCEMVG…EDAMTAMELY (157 aa). The short motif at 160 to 183 is the Nuclear localization signal element; that stretch reads RQHMHKAIPFQVAQKEILKLLKGK. The tract at residues 272-332 is disordered; that stretch reads VASTAKAHPE…EGQGARSAPP (61 aa). Residues 310–321 show a composition bias toward basic and acidic residues; sequence GDTREAQDRQEG.

It is found in the nucleus. The protein resides in the nucleolus. Exonuclease with activity against single- and double-stranded DNA and RNA. Mediates p53-induced apoptosis. When induced by p53 following DNA damage, digests double-stranded DNA to form single-stranded DNA and amplifies DNA damage signals, leading to enhancement of apoptosis. This chain is Apoptosis-enhancing nuclease, found in Rattus norvegicus (Rat).